Reading from the N-terminus, the 754-residue chain is MKQRMKKPSLGTFILILILIGILAYVLWQFLSPKLGYKSLSDLEQRIITNAKSATDDNFFWAFGFDISDFRIKVVEQVGNRIESYQVVADPTIIRLYQAGTGGVISENILSQLGSSAPKVNSWREIIQLATKASLTSEIIENAINQKINNALSLVGAGQSVSKNTIVNANLPVIFNFDRPRGNFLSSFIVPYIPFLLISLFGFWLFFRLSQNSQAGGGLFNPGKNQAIRIKSNKKFTDVAGNAEVKEEIAEFVDYLKNPKKYAAAGAKIPKGILLGGPPGTGKTLLAKATAGEANVPFFFISASNFVELYVGVGAKRVRELFKEARAESPAIIFIDELDAIGRSRGSGIGGGHDEREQTLNQLLVEMDGMVENSGILLIGATNRTDVLDPALLRPGRFDRSIIVGLPDIKEREEILKLHAKGKRISQNITLANIAKRTPGFSGAQLENVINEATLLSVREKTQVITGKQIDEAIDRVISGPAKKNRVITEDERTMVAYHEAGHAVVGIKLRSGVKVQKITIVPRGNTGGYNLMLPEHEKYNSTKSELLASIAAFMGGRAAEEIIYGKNEISTGAANDIEKATKIARRMVTEFGMSNLGPIQYEQDNSSPFLGRDYFKNASFSSQVGHEIDIEIREIISSSYKLAIATIQEHRLLLELIKDTLLEKETIVFEEIQQLEQTLKPLPKSTEIEEKQKVNTKDILEELMGSDFANNQEKSYENEDQNQNSLEAINYNIDDQDDDKNDSESKIDSSKEQ.

The Cytoplasmic portion of the chain corresponds to 1–9 (MKQRMKKPS). A helical membrane pass occupies residues 10-30 (LGTFILILILIGILAYVLWQF). The Extracellular segment spans residues 31–186 (LSPKLGYKSL…FDRPRGNFLS (156 aa)). The chain crosses the membrane as a helical span at residues 187-207 (SFIVPYIPFLLISLFGFWLFF). Residues 208–754 (RLSQNSQAGG…ESKIDSSKEQ (547 aa)) are Cytoplasmic-facing. 277 to 284 (GPPGTGKT) serves as a coordination point for ATP. Residue His499 coordinates Zn(2+). The active site involves Glu500. Residues His503 and Asp577 each contribute to the Zn(2+) site. Positions 713-754 (QEKSYENEDQNQNSLEAINYNIDDQDDDKNDSESKIDSSKEQ) are disordered. Over residues 743–754 (DSESKIDSSKEQ) the composition is skewed to basic and acidic residues.

This sequence in the central section; belongs to the AAA ATPase family. The protein in the C-terminal section; belongs to the peptidase M41 family. As to quaternary structure, homohexamer. It depends on Zn(2+) as a cofactor.

Its subcellular location is the cell membrane. Its function is as follows. Acts as a processive, ATP-dependent zinc metallopeptidase for both cytoplasmic and membrane proteins. Plays a role in the quality control of integral membrane proteins. In Mesomycoplasma conjunctivae (strain ATCC 25834 / NCTC 10147 / HRC/581) (Mycoplasma conjunctivae), this protein is ATP-dependent zinc metalloprotease FtsH.